The following is a 177-amino-acid chain: ATP synthase subunit delta (177 aa).

It belongs to the ATPase delta chain family. In terms of assembly, F-type ATPases have 2 components, F(1) - the catalytic core - and F(0) - the membrane proton channel. F(1) has five subunits: alpha(3), beta(3), gamma(1), delta(1), epsilon(1). F(0) has three main subunits: a(1), b(2) and c(10-14). The alpha and beta chains form an alternating ring which encloses part of the gamma chain. F(1) is attached to F(0) by a central stalk formed by the gamma and epsilon chains, while a peripheral stalk is formed by the delta and b chains.

Its subcellular location is the cell inner membrane. Its function is as follows. F(1)F(0) ATP synthase produces ATP from ADP in the presence of a proton or sodium gradient. F-type ATPases consist of two structural domains, F(1) containing the extramembraneous catalytic core and F(0) containing the membrane proton channel, linked together by a central stalk and a peripheral stalk. During catalysis, ATP synthesis in the catalytic domain of F(1) is coupled via a rotary mechanism of the central stalk subunits to proton translocation. Functionally, this protein is part of the stalk that links CF(0) to CF(1). It either transmits conformational changes from CF(0) to CF(1) or is implicated in proton conduction. The sequence is that of ATP synthase subunit delta from Shigella flexneri.